The primary structure comprises 35 residues: Cytochrome b6-f complex subunit 5 (35 aa).

The chain crosses the membrane as a helical span at residues 5–25 (LLCGIVLGLIPVTLTGLFVAA).

Belongs to the PetG family. The 4 large subunits of the cytochrome b6-f complex are cytochrome b6, subunit IV (17 kDa polypeptide, PetD), cytochrome f and the Rieske protein, while the 4 small subunits are PetG, PetL, PetM and PetN. The complex functions as a dimer.

Its subcellular location is the plastid. It localises to the organellar chromatophore thylakoid membrane. Component of the cytochrome b6-f complex, which mediates electron transfer between photosystem II (PSII) and photosystem I (PSI), cyclic electron flow around PSI, and state transitions. PetG is required for either the stability or assembly of the cytochrome b6-f complex. This Paulinella chromatophora protein is Cytochrome b6-f complex subunit 5.